A 146-amino-acid polypeptide reads, in one-letter code: Decarboxylase dmxR15 (146 aa).

The EthD domain maps to 31–126 (PGMSEGDYRN…MHDHEVFADT (96 aa)).

It belongs to the tpcK family.

The enzyme catalyses atrochrysone carboxylate + H(+) = atrochrysone + CO2. It functions in the pathway secondary metabolite biosynthesis. Functionally, decarboxylase; part of the gene cluster that mediates the biosynthesis of the dimeric xanthones cryptosporioptides. The pathway begins with the synthesis of atrochrysone thioester by the polyketide synthase dmx-nrPKS. The atrochrysone carboxyl ACP thioesterase dmxR1 then breaks the thioester bond and releases the atrochrysone carboxylic acid from dmx-nrPKS. Atrochrysone carboxylic acid is decarboxylated by the decarboxylase dmxR15, and oxidized by the anthrone oxygenase dmxR16 to yield emodin. Emodin is then reduced to emodin hydroquinone by the oxidoreductase dmxR7. A-ring reduction by the short chain dehydrogenase dmxR18, dehydration by the scytalone dehydratase-like protein dmxR17 and probable spontaneous re-oxidation, results in overall deoxygenation to chrysophanol. Baeyer-Villiger oxidation by the Baeyer-Villiger monooxygenase (BVMO) dmxR6 then yields monodictylactone in equilibrium with monodictyphenone. In the case of the cryptosporioptides biosynthesis, monodictylactone is reduced at C-12 to an alcohol (by the short chain dehydrogenases dmxR12 or dmxR8) and hydroxylated at C-5 by dmxR9, yielding the electron-rich aromatic which could eliminate H(2)O to form the ortho-quinonemethide, followed by tautomerisation to paraquinone and complete the formal reduction to produce the 10-methylgroup. Conjugate addition of C-4a-OH to the resulting paraquinone by the monooxygenase dmxR10 then gives cyclohexadienone, which is then reduced at C-5 by the short chain dehydrogenase dmxR3 to give the dihydroxanthone. The 6,7-epoxide in the cryptosporioptides could be introduced by the cytochrome P450 monooxygenase dmxL3. The highly reducing PKS dmxL2 manufactures butyrate, which is further carboxylated by dmxL1 to form ethylmalonate. It is not yet clear whether the carboxylation occurs while the butyrate is attached to the ACP of dmxL2, but this unusual fungal metabolite could then be esterified to O-5 by the O-acetyltransferase dmxR13. Finally, dimerization performed by dmxR5 gives the observed dimers cryptosporioptides A, B and C as the final products of the pathway. This chain is Decarboxylase dmxR15, found in Cryptosporiopsis sp. (strain 8999).